A 100-amino-acid polypeptide reads, in one-letter code: NAD(P)H-quinone oxidoreductase subunit 4L, chloroplastic (100 aa).

3 helical membrane passes run 1-21 (MLEH…YGLI), 31-51 (ICLE…SDFF), and 60-80 (IFAI…LAIL).

The protein belongs to the complex I subunit 4L family. NDH is composed of at least 16 different subunits, 5 of which are encoded in the nucleus.

It localises to the plastid. The protein resides in the chloroplast thylakoid membrane. The enzyme catalyses a plastoquinone + NADH + (n+1) H(+)(in) = a plastoquinol + NAD(+) + n H(+)(out). The catalysed reaction is a plastoquinone + NADPH + (n+1) H(+)(in) = a plastoquinol + NADP(+) + n H(+)(out). Its function is as follows. NDH shuttles electrons from NAD(P)H:plastoquinone, via FMN and iron-sulfur (Fe-S) centers, to quinones in the photosynthetic chain and possibly in a chloroplast respiratory chain. The immediate electron acceptor for the enzyme in this species is believed to be plastoquinone. Couples the redox reaction to proton translocation, and thus conserves the redox energy in a proton gradient. This Trachelium caeruleum (Blue throatwort) protein is NAD(P)H-quinone oxidoreductase subunit 4L, chloroplastic.